A 160-amino-acid polypeptide reads, in one-letter code: Calcium-binding protein CP1 (160 aa).

3 EF-hand domains span residues 22–49 (AFEI…IPSG), 52–87 (NDET…TPFS), and 93–128 (GDDG…AGLA). Residues Asp-27, Asp-29, Asp-31, Lys-33, Asp-38, Asp-65, Asn-67, Asp-69, Glu-76, Asp-106, Asp-108, Asp-110, Arg-112, and Asp-117 each coordinate Ca(2+).

Expressed in roots and flowers.

It localises to the cytoplasm. The protein resides in the cytosol. In terms of biological role, binds calcium in vitro. This Arabidopsis thaliana (Mouse-ear cress) protein is Calcium-binding protein CP1.